The following is a 98-amino-acid chain: NADH-ubiquinone oxidoreductase chain 4L (98 aa).

The next 3 membrane-spanning stretches (helical) occupy residues M1–M21, S29–L49, and I61–V81.

The protein belongs to the complex I subunit 4L family. In terms of assembly, core subunit of respiratory chain NADH dehydrogenase (Complex I) which is composed of 45 different subunits.

It is found in the mitochondrion inner membrane. It catalyses the reaction a ubiquinone + NADH + 5 H(+)(in) = a ubiquinol + NAD(+) + 4 H(+)(out). In terms of biological role, core subunit of the mitochondrial membrane respiratory chain NADH dehydrogenase (Complex I) which catalyzes electron transfer from NADH through the respiratory chain, using ubiquinone as an electron acceptor. Part of the enzyme membrane arm which is embedded in the lipid bilayer and involved in proton translocation. The chain is NADH-ubiquinone oxidoreductase chain 4L (MT-ND4L) from Uroderma bilobatum (Tent-making bat).